The chain runs to 257 residues: 5'-nucleotidase SurE (257 aa).

A divalent metal cation contacts are provided by Asp8, Asp9, Ser40, and Asn92.

It belongs to the SurE nucleotidase family. A divalent metal cation is required as a cofactor.

It localises to the cytoplasm. It catalyses the reaction a ribonucleoside 5'-phosphate + H2O = a ribonucleoside + phosphate. Its function is as follows. Nucleotidase that shows phosphatase activity on nucleoside 5'-monophosphates. The chain is 5'-nucleotidase SurE from Rhizobium etli (strain ATCC 51251 / DSM 11541 / JCM 21823 / NBRC 15573 / CFN 42).